The following is an 883-amino-acid chain: MQKIMHISVLLSPILWGLIFGVSSNSIQIGGLFPRGADQEYSAFRVGMVQFSTSEFRLTPHIDNLEVANSFAVTNAFCSQFSRGVYAIFGFYDKKSVNTITSFCGTLHVSFITPSFPTDGTHPFVIQMRPDLKGALLSLIEYYQWDKFAYLYDSDRGLSTLQAVLDSAAEKKWQVTAINVGNINNDKKDEMYRSLFQDLELKKERRVILDCERDKVNDIVDQVITIGKHVKGYHYIIANLGFTDGDLLKIQFGGANVSGFQIVDYDDSLVSKFIERWSTLEEKEYPGAHTTTIKYTSALTYDAVQVMTEAFRNLRKQRIEISRRGNAGDCLANPAVPWGQGVEIERALKQVQVEGLSGNIKFDQNGKRINYTINIMELKTNGPRKIGYWSEVDKMVVTLTELPSGNDTSGLENKTVVVTTILESPYVMMKKNHEMLEGNERYEGYCVDLAAEIAKHCGFKYKLTIVGDGKYGARDADTKIWNGMVGELVYGKADIAIAPLTITLVREEVIDFSKPFMSLGISIMIKKPQKSKPGVFSFLDPLAYEIWMCIVFAYIGVSVVLFLVSRFSPYEWHTEEFEDGRETQSSESTNEFGIFNSLWFSLGAFMRQGCDISPRSLSGRIVGGVWWFFTLIIISSYTANLAAFLTVERMVSPIESAEDLSKQTEIAYGTLDSGSTKEFFRRSKIAVFDKMWTYMRSAEPSVFVRTTAEGVARVRKSKGKYAYLLESTMNEYIEQRKPCDTMKVGGNLDSKGYGIATPKGSSLGNAVNLAVLKLNEQGLLDKLKNKWWYDKGECGSGGGDSKEKTSALSLSNVAGVFYILVGGLGLAMLVALIEFCYKSRAEAKRMKVAKNAQNINPSSSQNSQNFATYKEGYNVYGIESVKI.

An N-terminal signal peptide occupies residues 1 to 24 (MQKIMHISVLLSPILWGLIFGVSS). The Extracellular segment spans residues 25–543 (NSIQIGGLFP…GVFSFLDPLA (519 aa)). Cysteines 78 and 330 form a disulfide. N-linked (GlcNAc...) asparagine glycosylation is found at Asn256, Asn370, Asn406, and Asn413. The L-glutamate site is built by Pro499, Thr501, and Arg506. The helical transmembrane segment at 544 to 564 (YEIWMCIVFAYIGVSVVLFLV) threads the bilayer. The Cytoplasmic segment spans residues 565–591 (SRFSPYEWHTEEFEDGRETQSSESTNE). The segment at residues 592-607 (FGIFNSLWFSLGAFMR) is an intramembrane region (helical; Pore-forming). Residues 608-610 (QGC) lie within the membrane without spanning it. Cys610 carries S-palmitoyl cysteine lipidation. Residues 611-616 (DISPRS) lie on the Cytoplasmic side of the membrane. The helical transmembrane segment at 617-637 (LSGRIVGGVWWFFTLIIISSY) threads the bilayer. At 638–812 (TANLAAFLTV…EKTSALSLSN (175 aa)) the chain is on the extracellular side. Residues Ser675 and Thr676 each contribute to the L-glutamate site. Ser683 carries the post-translational modification Phosphoserine; by PKC. At Ser717 the chain carries Phosphoserine; by PKG. Glu726 is a binding site for L-glutamate. Cys739 and Cys794 are joined by a disulfide. Residues 813–833 (VAGVFYILVGGLGLAMLVALI) traverse the membrane as a helical segment. The Cytoplasmic portion of the chain corresponds to 834–883 (EFCYKSRAEAKRMKVAKNAQNINPSSSQNSQNFATYKEGYNVYGIESVKI). A lipid anchor (S-palmitoyl cysteine) is attached at Cys836. Residues Ser860 and Ser863 each carry the phosphoserine modification. Residues 867-877 (ATYKEGYNVYG) form a required for interaction with IQSEC1 region. Position 876 is a phosphotyrosine (Tyr876). Ser880 carries the phosphoserine modification.

The protein belongs to the glutamate-gated ion channel (TC 1.A.10.1) family. GRIA2 subfamily. Homotetramer or heterotetramer of pore-forming glutamate receptor subunits. Tetramers may be formed by the dimerization of dimers. May interact with MPP4. Forms a ternary complex with GRIP1 and CSPG4. Interacts with ATAD1 in an ATP-dependent manner. ATAD1-catalyzed ATP hydrolysis disrupts binding to ATAD1 and to GRIP1 and leads to AMPAR complex disassembly. Interacts with GRIP1 and GRIP2. Interacts with NSF via its C-terminus. Isoform 1, but not isoform 3, interacts with PICK1. Interacts with CACNG2. Interacts with GRIA1 and SYNDIG1. Part of a complex containing GRIA2, NSF and NAPA and/or NAPB. Interacts with SNX27 (via PDZ domain); the interaction is required for recycling to the plasma membrane when endocytosed and prevent degradation in lysosomes. Interacts with LRFN1. Found in a complex with GRIA1, GRIA3, GRIA4, CNIH2, CNIH3, CACNG2, CACNG3, CACNG4, CACNG5, CACNG7 and CACNG8. Interacts with CACNG5. Interacts with OLFM2. Interacts with AP4B1, AP4E1 and AP4M1; probably indirect it mediates the somatodendritic localization of GRIA2 in neurons. Forms a complex with GRIP1, NSG1 and STX12; controls the intracellular fate of AMPAR and the endosomal sorting of the GRIA2 subunit toward recycling and membrane targeting. Interacts with IQSEC1; the interaction is required for ARF6 activation. Interacts (heterotetramer form) with CNIH2 and CNIH3; this interaction promotes expression at the plasma membrane and extensively modulates their gating properties by slowing deactivation and desensitization kinetics. Post-translationally, phosphorylation at Tyr-876 is required for interaction with IQSEC1 and ARF6 activation, which in turn triggers AMPAR internalization for persistent synaptic depression. In terms of processing, palmitoylated. Depalmitoylated upon L-glutamate stimulation. ZDHHC3/GODZ specifically palmitoylates Cys-610, which leads to Golgi retention and decreased cell surface expression. In contrast, Cys-836 palmitoylation does not affect cell surface expression but regulates stimulation-dependent endocytosis. N-glycosylated. Post-translationally, ubiquitinated by RNF167, leading to its degradation.

It localises to the cell membrane. The protein localises to the postsynaptic cell membrane. Its subcellular location is the postsynaptic density membrane. The catalysed reaction is Ca(2+)(in) = Ca(2+)(out). The enzyme catalyses Na(+)(in) = Na(+)(out). Functionally, ionotropic glutamate receptor that functions as a ligand-gated cation channel, gated by L-glutamate and glutamatergic agonists such as alpha-amino-3-hydroxy-5-methyl-4-isoxazolepropionic acid (AMPA), quisqualic acid, and kainic acid. L-glutamate acts as an excitatory neurotransmitter at many synapses in the central nervous system and plays an important role in fast excitatory synaptic transmission. Binding of the excitatory neurotransmitter L-glutamate induces a conformation change, leading to the opening of the cation channel, and thereby converts the chemical signal to an electrical impulse upon entry of monovalent and divalent cations such as sodium and calcium. The receptor then desensitizes rapidly and enters in a transient inactive state, characterized by the presence of bound agonist. In the presence of CACNG4 or CACNG7 or CACNG8, shows resensitization which is characterized by a delayed accumulation of current flux upon continued application of L-glutamate. Through complex formation with NSG1, GRIP1 and STX12 controls the intracellular fate of AMPAR and the endosomal sorting of the GRIA2 subunit toward recycling and membrane targeting. In Macaca fascicularis (Crab-eating macaque), this protein is Glutamate receptor 2.